A 328-amino-acid polypeptide reads, in one-letter code: MKKASIISVGAYIPKDILTNFDLEKMVDTSDEWIVKRTGIKTRHLAKNEVTSDLAYKAALMAIQRAGIDKNDIDAVICATITPDYFCMPSTACKVASNLGLFDVTAFDISAACTGFIYLLEIAKSLVESGAKKNVLIIGAEKLSSIINWQDRSTCVLFGDGAGAAIVSSSDDNYIIDVHTSSDGSKGNLLITPGCGIVHPANKDTIDKKLNFLHMSGNEVFKIAVNTLAKDVVDILEKNSVSSKDIDLFIPHQANLRIIEAVKQRLDFTDEQCVVTVVDYGNTSSASIPMAMNDAYEDGRLKQGSLILLDAFGGGFTWGSALLRFGGK.

Residues Cys-113 and His-252 contribute to the active site. Residues 253–257 (QANLR) are ACP-binding. Asn-282 is a catalytic residue.

The protein belongs to the thiolase-like superfamily. FabH family. Homodimer.

Its subcellular location is the cytoplasm. The enzyme catalyses malonyl-[ACP] + acetyl-CoA + H(+) = 3-oxobutanoyl-[ACP] + CO2 + CoA. The protein operates within lipid metabolism; fatty acid biosynthesis. Catalyzes the condensation reaction of fatty acid synthesis by the addition to an acyl acceptor of two carbons from malonyl-ACP. Catalyzes the first condensation reaction which initiates fatty acid synthesis and may therefore play a role in governing the total rate of fatty acid production. Possesses both acetoacetyl-ACP synthase and acetyl transacylase activities. Its substrate specificity determines the biosynthesis of branched-chain and/or straight-chain of fatty acids. This chain is Beta-ketoacyl-[acyl-carrier-protein] synthase III, found in Campylobacter fetus subsp. fetus (strain 82-40).